Here is a 217-residue protein sequence, read N- to C-terminus: GTP-binding protein yptV2 (217 aa).

20 to 27 is a binding site for GTP; it reads GDSGVGKS. The Effector region signature appears at 42–50; that stretch reads FITTIGIDF. GTP contacts are provided by residues 68-72 and 126-129; these read DTAGQ and NKLD. The segment at 198–217 is disordered; it reads QPVRLTSGSPSPAQGKSCCR. The span at 201–211 shows a compositional bias: polar residues; that stretch reads RLTSGSPSPAQ. 2 S-geranylgeranyl cysteine lipidation sites follow: Cys-215 and Cys-216.

It belongs to the small GTPase superfamily. Rab family.

It is found in the cell membrane. In terms of biological role, protein transport. Probably involved in vesicular traffic. The chain is GTP-binding protein yptV2 (YPTV2) from Volvox carteri (Green alga).